Consider the following 969-residue polypeptide: Isoleucine--tRNA ligase (969 aa).

A 'HIGH' region motif is present at residues 68–78 (PYANGALHMGH). L-isoleucyl-5'-AMP is bound at residue Glu585. The 'KMSKS' region signature appears at 626–630 (KMSKS). Lys629 provides a ligand contact to ATP. 4 residues coordinate Zn(2+): Cys939, Cys942, Cys959, and Cys962.

The protein belongs to the class-I aminoacyl-tRNA synthetase family. IleS type 1 subfamily. In terms of assembly, monomer. Zn(2+) serves as cofactor.

It is found in the cytoplasm. It catalyses the reaction tRNA(Ile) + L-isoleucine + ATP = L-isoleucyl-tRNA(Ile) + AMP + diphosphate. Functionally, catalyzes the attachment of isoleucine to tRNA(Ile). As IleRS can inadvertently accommodate and process structurally similar amino acids such as valine, to avoid such errors it has two additional distinct tRNA(Ile)-dependent editing activities. One activity is designated as 'pretransfer' editing and involves the hydrolysis of activated Val-AMP. The other activity is designated 'posttransfer' editing and involves deacylation of mischarged Val-tRNA(Ile). This is Isoleucine--tRNA ligase from Prochlorococcus marinus (strain MIT 9211).